Reading from the N-terminus, the 397-residue chain is Nuclear egress protein 2 (397 aa).

Over 1 to 358 (MEMNKVLHQD…GPSRPQSGPW (358 aa)) the chain is Perinuclear space. Disordered stretches follow at residues 205–245 (RTAG…PPPP) and 291–332 (AAAG…PSLE). S216 carries the post-translational modification Phosphoserine. Low complexity-rich tracts occupy residues 224–239 (PSCS…AAAG) and 291–301 (AAAGQDVGGSA). Over residues 310–322 (SRRRGVSTHHRHP) the composition is skewed to basic residues. A helical transmembrane segment spans residues 359-381 (LPARFATLGPLVLALLLVLALLW). At 382–397 (RGHGQSSSPTRSAHRD) the chain is on the nuclear side.

The protein belongs to the herpesviridae NEC2 protein family. Forms a heterohexameric complex with NEC1. Interacts with host UBA7 and RNF170; this interaction promotes UBA7 proteasomal degradation. Phosphorylated. Phosphorylation by viral kinase UL97 at Ser-216 plays an important role for correct viral nuclear egress complex (NEC) localization.

The protein resides in the host nucleus inner membrane. Its function is as follows. Plays an essential role in virion nuclear egress, the first step of virion release from infected cell. Within the host nucleus, NEC1 interacts with the newly formed capsid through the vertexes and directs it to the inner nuclear membrane by associating with NEC2. Induces the budding of the capsid at the inner nuclear membrane as well as its envelopment into the perinuclear space. There, the NEC1/NEC2 complex promotes the fusion of the enveloped capsid with the outer nuclear membrane and the subsequent release of the viral capsid into the cytoplasm where it will reach the secondary budding sites in the host Golgi or trans-Golgi network. Inhibits host ISGylation and subsequent innate antiviral response by targeting host UBA7 for proteasomal degradation. This is Nuclear egress protein 2 from Human cytomegalovirus (strain AD169) (HHV-5).